Consider the following 603-residue polypeptide: Penicillin-binding protein activator LpoA (603 aa).

Positions 1 to 26 are cleaved as a signal peptide; the sequence is MAMNHHQRRSVPRLLTPIALSIVLSA. Cys-27 carries the N-palmitoyl cysteine lipid modification. Cys-27 carries S-diacylglycerol cysteine lipidation.

The protein belongs to the LpoA family. As to quaternary structure, interacts with PBP1a.

It is found in the cell outer membrane. Its function is as follows. Regulator of peptidoglycan synthesis that is essential for the function of penicillin-binding protein 1A (PBP1a). The sequence is that of Penicillin-binding protein activator LpoA from Vibrio cholerae serotype O1 (strain ATCC 39541 / Classical Ogawa 395 / O395).